The sequence spans 116 residues: Large ribosomal subunit protein uL18 (116 aa).

It belongs to the universal ribosomal protein uL18 family. As to quaternary structure, part of the 50S ribosomal subunit; part of the 5S rRNA/L5/L18/L25 subcomplex. Contacts the 5S and 23S rRNAs.

This is one of the proteins that bind and probably mediate the attachment of the 5S RNA into the large ribosomal subunit, where it forms part of the central protuberance. This Mycoplasma capricolum subsp. capricolum (strain California kid / ATCC 27343 / NCTC 10154) protein is Large ribosomal subunit protein uL18.